We begin with the raw amino-acid sequence, 218 residues long: Histone H1.1 (218 aa).

The segment at 1–42 is disordered; that stretch reads MSEVALPAPAASTSPEKPSAGKKAKKPAKAAAAAKKKPAGPS. The residue at position 2 (S2) is an N-acetylserine. S2 and S12 each carry phosphoserine. K17 bears the N6-acetyllysine mark. Basic residues predominate over residues 20–38; it reads AGKKAKKPAKAAAAAKKKP. At K37 the chain carries N6-(beta-hydroxybutyryl)lysine. The region spanning 39–112 is the H15 domain; the sequence is AGPSVSELIV…GASGSFKLNK (74 aa). The residue at position 44 (S44) is a Phosphoserine. Position 55 is an N6-(beta-hydroxybutyryl)lysine (K55). Residue R57 is modified to Citrulline. K67 is modified (N6-(beta-hydroxybutyryl)lysine). The residue at position 78 (K78) is an N6-acetyllysine. K88 carries the post-translational modification N6-(beta-hydroxybutyryl)lysine. At K93 the chain carries N6-(beta-hydroxybutyryl)lysine; alternate. The residue at position 93 (K93) is an N6-acetyllysine; alternate. S107 carries the post-translational modification Phosphoserine; by PKC. Position 109 is an N6-(beta-hydroxybutyryl)lysine (K109). A disordered region spans residues 116-218; the sequence is SVDAKPTATK…KPKKAAPKKK (103 aa). The segment covering 119–149 has biased composition (low complexity); the sequence is AKPTATKVATKTKVTSASKKPKKASGAAAAK. K125 bears the N6-acetyllysine mark. Basic residues-rich tracts occupy residues 150–183 and 190–218; these read KSVK…KKVA and KAVK…PKKK. Position 206 is a phosphothreonine (T206).

The protein belongs to the histone H1/H5 family. As to quaternary structure, interacts with DFFB. H1 histones are progressively phosphorylated during the cell cycle, becoming maximally phosphorylated during late G2 phase and M phase, and being dephosphorylated sharply thereafter. Post-translationally, citrullination at Arg-57 (H1R54ci) by PADI4 takes place within the DNA-binding site of H1 and results in its displacement from chromatin and global chromatin decondensation, thereby promoting pluripotency and stem cell maintenance.

Its subcellular location is the nucleus. It is found in the chromosome. Functionally, H1 histones bind to linker DNA between nucleosomes forming the macromolecular structure known as the chromatin fiber. H1 histones are necessary for the condensation of nucleosome chains into higher-order structured fibers. Also acts as a regulator of individual gene transcription through chromatin remodeling. The polypeptide is Histone H1.1 (Bos taurus (Bovine)).